Consider the following 293-residue polypeptide: Formamidopyrimidine-DNA glycosylase (293 aa).

Proline 2 (schiff-base intermediate with DNA) is an active-site residue. Glutamate 3 (proton donor) is an active-site residue. Residue lysine 58 is the Proton donor; for beta-elimination activity of the active site. Residues histidine 104, arginine 123, and lysine 166 each coordinate DNA. Residues 257–293 (AVYDRESEPCRTKGCGGVVKRFVQNGRSTFCCPKCQK) form an FPG-type zinc finger. Catalysis depends on arginine 283, which acts as the Proton donor; for delta-elimination activity.

This sequence belongs to the FPG family. As to quaternary structure, monomer. It depends on Zn(2+) as a cofactor.

It carries out the reaction Hydrolysis of DNA containing ring-opened 7-methylguanine residues, releasing 2,6-diamino-4-hydroxy-5-(N-methyl)formamidopyrimidine.. The catalysed reaction is 2'-deoxyribonucleotide-(2'-deoxyribose 5'-phosphate)-2'-deoxyribonucleotide-DNA = a 3'-end 2'-deoxyribonucleotide-(2,3-dehydro-2,3-deoxyribose 5'-phosphate)-DNA + a 5'-end 5'-phospho-2'-deoxyribonucleoside-DNA + H(+). In terms of biological role, involved in base excision repair of DNA damaged by oxidation or by mutagenic agents. Acts as a DNA glycosylase that recognizes and removes damaged bases. Has a preference for oxidized purines, such as 7,8-dihydro-8-oxoguanine (8-oxoG). Has AP (apurinic/apyrimidinic) lyase activity and introduces nicks in the DNA strand. Cleaves the DNA backbone by beta-delta elimination to generate a single-strand break at the site of the removed base with both 3'- and 5'-phosphates. This Rhodopseudomonas palustris (strain BisA53) protein is Formamidopyrimidine-DNA glycosylase.